Consider the following 156-residue polypeptide: SsrA-binding protein (156 aa).

The protein belongs to the SmpB family.

It is found in the cytoplasm. In terms of biological role, required for rescue of stalled ribosomes mediated by trans-translation. Binds to transfer-messenger RNA (tmRNA), required for stable association of tmRNA with ribosomes. tmRNA and SmpB together mimic tRNA shape, replacing the anticodon stem-loop with SmpB. tmRNA is encoded by the ssrA gene; the 2 termini fold to resemble tRNA(Ala) and it encodes a 'tag peptide', a short internal open reading frame. During trans-translation Ala-aminoacylated tmRNA acts like a tRNA, entering the A-site of stalled ribosomes, displacing the stalled mRNA. The ribosome then switches to translate the ORF on the tmRNA; the nascent peptide is terminated with the 'tag peptide' encoded by the tmRNA and targeted for degradation. The ribosome is freed to recommence translation, which seems to be the essential function of trans-translation. The chain is SsrA-binding protein from Shouchella clausii (strain KSM-K16) (Alkalihalobacillus clausii).